Consider the following 272-residue polypeptide: Sulfate transporter CysZ (272 aa).

Transmembrane regions (helical) follow at residues 29 to 49, 66 to 86, 148 to 168, and 219 to 239; these read FVIM…WLFI, WLSF…LLLF, IIAL…VPVL, and FVPV…TLMW.

Belongs to the CysZ family.

It is found in the cell inner membrane. Its function is as follows. High affinity, high specificity proton-dependent sulfate transporter, which mediates sulfate uptake. Provides the sulfur source for the cysteine synthesis pathway. The polypeptide is Sulfate transporter CysZ (Haemophilus influenzae (strain PittGG)).